Reading from the N-terminus, the 370-residue chain is Cell division protein DivIB (370 aa).

The disordered stretch occupies residues 1 to 65 (MKKKKDEELT…SNKKGTKRIV (65 aa)). Topologically, residues 1-74 (MKKKKDEELT…VKEQRLSRQK (74 aa)) are cytoplasmic. Composition is skewed to basic residues over residues 25–34 (SRFKRKRKAT) and 47–63 (RNNR…GTKR). A helical transmembrane segment spans residues 75-95 (LGILIGSTLIVIALFFGYFYS). The Extracellular portion of the chain corresponds to 96-370 (SISRVQKFSV…STVNTQQDID (275 aa)). Residues 98-169 (SRVQKFSVSG…GKVKIKVKEN (72 aa)) enclose the POTRA domain. The disordered stretch occupies residues 295 to 370 (SGWTDEAKAA…STVNTQQDID (76 aa)). Composition is skewed to low complexity over residues 304 to 314 (ASESSKSAESS) and 327 to 342 (SESA…STET). Residues 356–370 (SSNAESTVNTQQDID) show a composition bias toward polar residues.

Belongs to the FtsQ/DivIB family. DivIB subfamily.

It is found in the cell membrane. Its function is as follows. Cell division protein that may be involved in stabilizing or promoting the assembly of the division complex. This Pediococcus pentosaceus (strain ATCC 25745 / CCUG 21536 / LMG 10740 / 183-1w) protein is Cell division protein DivIB.